A 335-amino-acid polypeptide reads, in one-letter code: DNA-directed RNA polymerase subunit alpha (335 aa).

The segment at 1–233 (MVREKIRVST…DLLIPFLHAE (233 aa)) is alpha N-terminal domain (alpha-NTD). An alpha C-terminal domain (alpha-CTD) region spans residues 263 to 335 (KKKIALKFIF…HFVIDLKNKR (73 aa)).

Belongs to the RNA polymerase alpha chain family. As to quaternary structure, in plastids the minimal PEP RNA polymerase catalytic core is composed of four subunits: alpha, beta, beta', and beta''. When a (nuclear-encoded) sigma factor is associated with the core the holoenzyme is formed, which can initiate transcription.

It is found in the plastid. It localises to the chloroplast. The catalysed reaction is RNA(n) + a ribonucleoside 5'-triphosphate = RNA(n+1) + diphosphate. Its function is as follows. DNA-dependent RNA polymerase catalyzes the transcription of DNA into RNA using the four ribonucleoside triphosphates as substrates. The polypeptide is DNA-directed RNA polymerase subunit alpha (Spinacia oleracea (Spinach)).